Here is a 151-residue protein sequence, read N- to C-terminus: Linear element protein Mug20 (151 aa).

Residues 56-140 are a coiled coil; that stretch reads EEKLRALDKL…CAMEKLKMIE (85 aa).

Component of linear elements (LinEs), which are similar to synaptonemal complexes, at least composed of rec27, rec25, rec10 and mug20. Interacts with rec10.

The protein localises to the cytoplasm. The protein resides in the nucleus. It is found in the chromosome. Functionally, during meiotic DNA recombination, binds to and may help activate DNA double-strand break (DSB) hotspot sites. The chain is Linear element protein Mug20 from Schizosaccharomyces pombe (strain 972 / ATCC 24843) (Fission yeast).